Reading from the N-terminus, the 834-residue chain is DNA gyrase subunit A (834 aa).

Residues 53 to 520 (LPDVRDGLKP…NDTEIDEEDL (468 aa)) form the Topo IIA-type catalytic domain. Tyr141 acts as the O-(5'-phospho-DNA)-tyrosine intermediate in catalysis. The GyrA-box motif lies at 547–553 (QGRGGVG).

The protein belongs to the type II topoisomerase GyrA/ParC subunit family. In terms of assembly, heterotetramer, composed of two GyrA and two GyrB chains. In the heterotetramer, GyrA contains the active site tyrosine that forms a transient covalent intermediate with DNA, while GyrB binds cofactors and catalyzes ATP hydrolysis.

Its subcellular location is the cytoplasm. It carries out the reaction ATP-dependent breakage, passage and rejoining of double-stranded DNA.. Its function is as follows. A type II topoisomerase that negatively supercoils closed circular double-stranded (ds) DNA in an ATP-dependent manner to modulate DNA topology and maintain chromosomes in an underwound state. Negative supercoiling favors strand separation, and DNA replication, transcription, recombination and repair, all of which involve strand separation. Also able to catalyze the interconversion of other topological isomers of dsDNA rings, including catenanes and knotted rings. Type II topoisomerases break and join 2 DNA strands simultaneously in an ATP-dependent manner. This chain is DNA gyrase subunit A, found in Brachyspira hyodysenteriae (strain ATCC 49526 / WA1).